A 308-amino-acid chain; its full sequence is Cysteine proteinase 3 (308 aa).

A signal peptide spans Met-1–Ala-13. Residues Asn-14–Ala-92 constitute a propeptide, activation peptide. 2 cysteine pairs are disulfide-bonded: Cys-112–Cys-153 and Cys-146–Cys-186. The active site involves Cys-115. Residues His-251 and Asn-271 contribute to the active site.

It belongs to the peptidase C1 family.

It localises to the cytoplasm. Its subcellular location is the cytoplasmic vesicle. The protein localises to the phagosome. It carries out the reaction Hydrolysis of proteins, including basement membrane collagen and azocasein. Preferential cleavage: Arg-Arg-|-Xaa in small molecule substrates including Z-Arg-Arg-|-NHMec.. Cysteine protease which may be involved in pathogenicity. The protein is Cysteine proteinase 3 of Entamoeba histolytica (strain ATCC 30459 / HM-1:IMSS / ABRM).